The sequence spans 156 residues: Transcriptional repressor NrdR (156 aa).

The segment at 3 to 34 is a zinc-finger region; it reads CPFCGSMDTRVLDSRPTLDGTAIRRRRECSSC. An ATP-cone domain is found at 49 to 139; the sequence is VLVVKKDGRR…VYRDFREVDQ (91 aa).

It belongs to the NrdR family. Requires Zn(2+) as cofactor.

In terms of biological role, negatively regulates transcription of bacterial ribonucleotide reductase nrd genes and operons by binding to NrdR-boxes. The polypeptide is Transcriptional repressor NrdR (Thermotoga maritima (strain ATCC 43589 / DSM 3109 / JCM 10099 / NBRC 100826 / MSB8)).